The sequence spans 355 residues: D-alanine--D-alanine ligase (355 aa).

An ATP-grasp domain is found at 143–350 (KTIFSNLKIP…IEQLVAKLVD (208 aa)). ATP is bound at residue 178–233 (LKKLNFPFFVKPSNSGSSLGISKVINESEILQSLEKAQKIDSRILVEEGLEVREIE). Mg(2+)-binding residues include Asp-303, Glu-317, and Asn-319.

Belongs to the D-alanine--D-alanine ligase family. Mg(2+) serves as cofactor. Requires Mn(2+) as cofactor.

Its subcellular location is the cytoplasm. The enzyme catalyses 2 D-alanine + ATP = D-alanyl-D-alanine + ADP + phosphate + H(+). The protein operates within cell wall biogenesis; peptidoglycan biosynthesis. Functionally, cell wall formation. The sequence is that of D-alanine--D-alanine ligase from Prochlorococcus marinus (strain MIT 9215).